Consider the following 223-residue polypeptide: Serine/threonine/tyrosine-interacting protein (223 aa).

Residues 28–176 (EMQEILPGLF…LQEYEAIYLA (149 aa)) enclose the Tyrosine-protein phosphatase domain. The Interaction with FBXW7 signature appears at 76-78 (FQQ). Phosphoserine occurs at positions 184, 193, and 201. A disordered region spans residues 197-223 (GTTGSLKRTHEEEDDFGTMQVATAQNG).

Belongs to the protein-tyrosine phosphatase family. Non-receptor class subfamily. Interacts with MAPK1; independently of MAPK1 phosphorylation status. Interacts with CARHSP1/Crhsp-24. Interacts (via FQQ motif) with FBXW7 (via F-box domain); the interaction is direct and prevents FBXW7 interaction with SKP1, a component of the SCF(FBXW7) complex.

It is found in the nucleus. It localises to the cytoplasm. Its subcellular location is the cytosol. In terms of biological role, catalytically inactive phosphatase. Acts as a nuclear anchor for MAPK1/MAPK3 (ERK1/ERK2). Modulates cell-fate decisions and cell migration by spatiotemporal regulation of MAPK1/MAPK3 (ERK1/ERK2). By binding to the F-box of FBXW7, prevents the assembly of FBXW7 into the SCF E3 ubiquitin-protein ligase complex, and thereby inhibits degradation of its substrates. Plays a role in spermatogenesis. This is Serine/threonine/tyrosine-interacting protein (STYX) from Pongo abelii (Sumatran orangutan).